Reading from the N-terminus, the 578-residue chain is MASEFSKKRKLKDAKIATEDGAATDKKTKKVKKDKKEKKAAEEVVEDATPEEENDAQKAEEQQDGDEVIPTGNGDKEDSDDKDAEAGDELTKTNDSLIAPSIATNATDFSELNLSDKTMKAIAEMGFTKMTEIQRRGIPPLLAGKDVLGAAKTGSGKTLAFLIPAIEMLSSLRFKPRNGTGAIVVTPTRELALQIFGVARELMKNHSQTYGVVIGGANRRAEAEKLGKGVNLLIATPGRLLDHLQNTPFVFKNMRSLIIDEADRILEIGFEDEMRQIIKILPKEDRQTMLFSATQTTKVEDLARISLRPGPLYVNVDEEKQFSTVEGLDQGYVVVDADKRFLLLFSFLKKMQKKKVIVFFSSCNSVKYYSELLQYIDLQVLDLHGKQKQQKRTNTFFEFCNAKQGTLICTDVAARGLDIPAVDWIVQFDPPDDPRDYIHRVGRTARGNNTKGRSLLFLQPNELGFLAHLKAAKVPVVEYDFPKSKILNVQSQLEKLIGQNYYLNQSAKDGYRSYLHAYASHSLRSVFDIHKLDLVKVAKSFGFSTPPRVDITLASSMSRDKKQTSRRAYGSQPKQNRH.

The disordered stretch occupies residues 1–91 (MASEFSKKRK…KDAEAGDELT (91 aa)). Residues 13–26 (DAKIATEDGAATDK) are compositionally biased toward basic and acidic residues. The segment covering 27-36 (KTKKVKKDKK) has biased composition (basic residues). Composition is skewed to acidic residues over residues 43–54 (EVVEDATPEEEN) and 77–88 (EDSDDKDAEAGD). A Q motif motif is present at residues 107 to 135 (TDFSELNLSDKTMKAIAEMGFTKMTEIQR). The Helicase ATP-binding domain maps to 138 to 313 (IPPLLAGKDV…RISLRPGPLY (176 aa)). Residue 151–158 (AKTGSGKT) participates in ATP binding. Residues 260 to 263 (DEAD) carry the DEAD box motif. Positions 339 to 355 (KRFLLLFSFLKKMQKKK) match the Bipartite nuclear localization signal motif. Residues 343–497 (LLFSFLKKMQ…NVQSQLEKLI (155 aa)) enclose the Helicase C-terminal domain. A disordered region spans residues 556–578 (SMSRDKKQTSRRAYGSQPKQNRH).

This sequence belongs to the DEAD box helicase family. DDX18/HAS1 subfamily. In terms of assembly, associates in the nucleolus with the 60S and pre-60S ribosomal subunits.

The protein resides in the nucleus. It localises to the nucleolus. It catalyses the reaction ATP + H2O = ADP + phosphate + H(+). Functionally, ATP-dependent RNA helicase involved in 40S ribosomal subunit biogenesis. Required for the processing and cleavage of 35S pre-rRNA at sites A0, A1, and A2, leading to mature 18S rRNA. This Neurospora crassa (strain ATCC 24698 / 74-OR23-1A / CBS 708.71 / DSM 1257 / FGSC 987) protein is ATP-dependent RNA helicase has-1 (has-1).